Here is a 231-residue protein sequence, read N- to C-terminus: Probable pseudouridine-5'-phosphatase (231 aa).

Asp-15 (nucleophile) is an active-site residue. 2 residues coordinate Mg(2+): Asp-15 and Asp-17. The Proton donor role is filled by Asp-17.

Belongs to the HAD-like hydrolase superfamily. CbbY/CbbZ/Gph/YieH family. The cofactor is Mg(2+).

It carries out the reaction psi-UMP + H2O = pseudouridine + phosphate. Its function is as follows. Dephosphorylates pseudouridine 5'-phosphate, a potential intermediate in rRNA degradation. The sequence is that of Probable pseudouridine-5'-phosphatase (Gs1l) from Drosophila melanogaster (Fruit fly).